Here is a 309-residue protein sequence, read N- to C-terminus: MILTVTLNPAIDVSYPLNELKCDTVNRVVDVTKTPGGKGLNVSRVLNDFGETVKATGCIGGESGDFIINHLPDSILSRFYKISGDTRTCIAILHEGNQTEILEKGPLLSVDEIDGFTHHFKYLLNDVDVVTLSGSLPAGMPDDYYQKLIKIANLNGKKTVLDCSGNALEAVLKGDSKPTVIKPNLEELSQLLGKEMTKDFEALKEVLQDELFEGIEWIIVSLGADGVFAKHKDTFYNVDIPKIKIVSAVGSGDSTVAGIASGLANDEDDRALLTKANVLGMLNAQEKTTGHVNMANYDKLYQSIKVKEV.

This sequence belongs to the carbohydrate kinase PfkB family. LacC subfamily.

The enzyme catalyses D-tagatofuranose 6-phosphate + ATP = D-tagatofuranose 1,6-bisphosphate + ADP + H(+). The protein operates within carbohydrate metabolism; D-tagatose 6-phosphate degradation; D-glyceraldehyde 3-phosphate and glycerone phosphate from D-tagatose 6-phosphate: step 1/2. The protein is Tagatose-6-phosphate kinase of Streptococcus pyogenes serotype M28 (strain MGAS6180).